A 45-amino-acid polypeptide reads, in one-letter code: MMKKIFFIFALSGILAACTVGGGVSAGGGSNGVGLGVGIGSGIRF.

The helical transmembrane segment at 5 to 25 (IFFIFALSGILAACTVGGGVS) threads the bilayer.

It localises to the membrane. This is an uncharacterized protein from Haemophilus influenzae (strain ATCC 51907 / DSM 11121 / KW20 / Rd).